The sequence spans 647 residues: ATP-dependent zinc metalloprotease FtsH (647 aa).

Residues 1–33 (MARKSDEDTNPMDKFMDRLRGSPGDGGPGRPDP) are disordered. Over 1–39 (MARKSDEDTNPMDKFMDRLRGSPGDGGPGRPDPSQRKVH) the chain is Cytoplasmic. Residues 40–60 (FSIWYFILALLLIVWMQTYMG) traverse the membrane as a helical segment. Residues 61-134 (EQQSEKISYS…RFSGDVQNPW (74 aa)) lie on the Periplasmic side of the membrane. The helical transmembrane segment at 135-155 (LGLITWWLLPFAIMIFFWSFL) threads the bilayer. Residues 156–647 (MRRMGGGPQG…DPVQVEGGAA (492 aa)) lie on the Cytoplasmic side of the membrane. Residue 227 to 234 (GAPGTGKT) participates in ATP binding. His-449 serves as a coordination point for Zn(2+). Glu-450 is a catalytic residue. Zn(2+) contacts are provided by His-453 and Asp-526.

This sequence in the central section; belongs to the AAA ATPase family. It in the C-terminal section; belongs to the peptidase M41 family. As to quaternary structure, homohexamer. It depends on Zn(2+) as a cofactor.

The protein resides in the cell inner membrane. Its function is as follows. Acts as a processive, ATP-dependent zinc metallopeptidase for both cytoplasmic and membrane proteins. Plays a role in the quality control of integral membrane proteins. The protein is ATP-dependent zinc metalloprotease FtsH of Syntrophobacter fumaroxidans (strain DSM 10017 / MPOB).